Consider the following 1408-residue polypeptide: DNA-directed RNA polymerase subunit beta' (1408 aa).

Residues C70, C72, C85, and C88 each coordinate Zn(2+). The Mg(2+) site is built by D458, D460, and D462. Positions 813, 887, 894, and 897 each coordinate Zn(2+). The segment at 1387–1408 (AELEAATATAPADAGGDSPATE) is disordered. Residues 1389-1408 (LEAATATAPADAGGDSPATE) are compositionally biased toward low complexity.

It belongs to the RNA polymerase beta' chain family. As to quaternary structure, the RNAP catalytic core consists of 2 alpha, 1 beta, 1 beta' and 1 omega subunit. When a sigma factor is associated with the core the holoenzyme is formed, which can initiate transcription. Mg(2+) serves as cofactor. The cofactor is Zn(2+).

The enzyme catalyses RNA(n) + a ribonucleoside 5'-triphosphate = RNA(n+1) + diphosphate. Its function is as follows. DNA-dependent RNA polymerase catalyzes the transcription of DNA into RNA using the four ribonucleoside triphosphates as substrates. This Polaromonas sp. (strain JS666 / ATCC BAA-500) protein is DNA-directed RNA polymerase subunit beta'.